Consider the following 790-residue polypeptide: Cadherin-6 (790 aa).

A signal peptide spans 1-18 (MRTYRYFLLLFWVGQPYP). Positions 19–53 (TLSTPLSKRTSGFPAKKRALELSGNSKNELNRSKR) are excised as a propeptide. N-linked (GlcNAc...) asparagine glycosylation occurs at N49. Cadherin domains follow at residues 54-159 (SWMW…EPIF), 160-268 (TKEV…PPRF), 269-383 (PQST…PPVF), 384-486 (SKLA…DNAP), and 487-608 (EFAE…LIHP). Topologically, residues 54–615 (SWMWNQFFLL…IHPTGLSTGA (562 aa)) are extracellular. Residue N255 is glycosylated (N-linked (GlcNAc...) asparagine). Positions 259–288 (TDVNDNPPRFPQSTYQFKTPESSPPGTPIG) are disordered. A compositionally biased stretch (polar residues) spans 269-279 (PQSTYQFKTPE). N-linked (GlcNAc...) asparagine glycans are attached at residues N399, N437, N455, and N536. A helical membrane pass occupies residues 616 to 636 (LVAILLCIVILLVTVVLFAAL). The Cytoplasmic segment spans residues 637 to 790 (RRQRKKEPLI…YGGVDSDKDS (154 aa)). S786 and S790 each carry phosphoserine.

Highly expressed in brain, cerebellum, and kidney. Lung, pancreas, and gastric mucosa show a weak expression. Also expressed in certain liver and kidney carcinomas.

The protein resides in the cell membrane. Its function is as follows. Cadherins are calcium-dependent cell adhesion proteins. They preferentially interact with themselves in a homophilic manner in connecting cells; cadherins may thus contribute to the sorting of heterogeneous cell types. The chain is Cadherin-6 (CDH6) from Homo sapiens (Human).